The following is a 427-amino-acid chain: 3-phosphoshikimate 1-carboxyvinyltransferase (427 aa).

3 residues coordinate 3-phosphoshikimate: Lys20, Ser21, and Arg25. Lys20 lines the phosphoenolpyruvate pocket. Phosphoenolpyruvate is bound by residues Gly92 and Arg120. Positions 166, 168, 312, and 339 each coordinate 3-phosphoshikimate. Gln168 provides a ligand contact to phosphoenolpyruvate. The Proton acceptor role is filled by Asp312. Residues Arg343 and Arg385 each coordinate phosphoenolpyruvate.

The protein belongs to the EPSP synthase family. As to quaternary structure, monomer.

It localises to the cytoplasm. It catalyses the reaction 3-phosphoshikimate + phosphoenolpyruvate = 5-O-(1-carboxyvinyl)-3-phosphoshikimate + phosphate. It functions in the pathway metabolic intermediate biosynthesis; chorismate biosynthesis; chorismate from D-erythrose 4-phosphate and phosphoenolpyruvate: step 6/7. In terms of biological role, catalyzes the transfer of the enolpyruvyl moiety of phosphoenolpyruvate (PEP) to the 5-hydroxyl of shikimate-3-phosphate (S3P) to produce enolpyruvyl shikimate-3-phosphate and inorganic phosphate. The polypeptide is 3-phosphoshikimate 1-carboxyvinyltransferase (Streptococcus pneumoniae serotype 2 (strain D39 / NCTC 7466)).